The sequence spans 124 residues: MTETNQIFRCNVCGNIVEVLNPGAGQLVCCNQPMELLVARRTDVGPEKHVPVVEETGTGIRVKVGEVPHPMEENHHIQWIEVIAGDMVYRKDLNPGDNPEAEFPVEMASDFMVRIYCNIHGLWY.

The Fe cation site is built by C10, C13, C29, C30, H49, H69, H75, C117, and H120.

Belongs to the desulfoferrodoxin family. Fe(3+) serves as cofactor. Requires Cu(2+) as cofactor.

The sequence is that of Desulfoferrodoxin homolog from Methanothermobacter thermautotrophicus (strain ATCC 29096 / DSM 1053 / JCM 10044 / NBRC 100330 / Delta H) (Methanobacterium thermoautotrophicum).